Here is a 156-residue protein sequence, read N- to C-terminus: Lipoprotein signal peptidase (156 aa).

3 helical membrane passes run 5 to 25 (FKFIFYFWGAFVLVFALDQWV), 64 to 84 (YLHLALIGVLFIYLFWQRTLL), and 89 to 109 (IAFGMMLGAGVSNLLDRFIHG). Residues Asp113 and Asp130 contribute to the active site. The helical transmembrane segment at 122-142 (NFAIFNVADVMINISVALILI) threads the bilayer.

This sequence belongs to the peptidase A8 family.

The protein localises to the cell inner membrane. It carries out the reaction Release of signal peptides from bacterial membrane prolipoproteins. Hydrolyzes -Xaa-Yaa-Zaa-|-(S,diacylglyceryl)Cys-, in which Xaa is hydrophobic (preferably Leu), and Yaa (Ala or Ser) and Zaa (Gly or Ala) have small, neutral side chains.. Its pathway is protein modification; lipoprotein biosynthesis (signal peptide cleavage). This protein specifically catalyzes the removal of signal peptides from prolipoproteins. The polypeptide is Lipoprotein signal peptidase (Campylobacter jejuni subsp. jejuni serotype O:2 (strain ATCC 700819 / NCTC 11168)).